A 311-amino-acid polypeptide reads, in one-letter code: Olfactory receptor 1073 (311 aa).

The Extracellular segment spans residues 1-25; the sequence is MKQQNDTQILQFLLLGLSENTELQP. A glycan (N-linked (GlcNAc...) asparagine) is linked at Asn5. The chain crosses the membrane as a helical span at residues 26 to 46; it reads LIYWLFFSMYLVTVWGNLIII. The Cytoplasmic portion of the chain corresponds to 47-57; that stretch reads LATVLDFRLHT. Residues 58-78 traverse the membrane as a helical segment; it reads AMYFFLCNLSFVDICLISTTI. The Extracellular portion of the chain corresponds to 79 to 97; it reads PKMLANVHLNHKAITYEGC. Cys97 and Cys179 are disulfide-bonded. A helical membrane pass occupies residues 98-118; the sequence is IMQIYFFTLFVGLDNFLLAVM. Residues 119 to 133 lie on the Cytoplasmic side of the membrane; the sequence is AYDRFVAICHPLRYT. Residues 134–154 traverse the membrane as a helical segment; that stretch reads SIMTPHLCMSLVLVSWIASVL. A glycan (N-linked (GlcNAc...) asparagine) is linked at Asn155. Over 155 to 196 the chain is Extracellular; it reads NSSLQSFLVLQLSFCTEVEIPHFFCELSMLVHLACSDTFLSD. The helical transmembrane segment at 197-217 threads the bilayer; that stretch reads MAMNVLAALLGGGCLVGILYS. Residues 218 to 244 lie on the Cytoplasmic side of the membrane; it reads YSKIVSSIQAISSAEGKYKAFSTCVSH. The chain crosses the membrane as a helical span at residues 245–265; it reads LSVVSLFYCTLLGVYLSSAVT. Topologically, residues 266–271 are extracellular; sequence QNSHST. A helical membrane pass occupies residues 272–292; that stretch reads AATSLMYTVVTPMLNPFIYSL. Over 293–311 the chain is Cytoplasmic; sequence RNDNIKRALKNFVKKKLEK.

It belongs to the G-protein coupled receptor 1 family. As to expression, tongue specific.

The protein localises to the cell membrane. In terms of biological role, possible taste receptor. This Rattus norvegicus (Rat) protein is Olfactory receptor 1073 (Olr1073).